A 348-amino-acid polypeptide reads, in one-letter code: Thioredoxin-related protein DsbJ (348 aa).

The N-terminal stretch at 1–32 (MILLQNIKRCSLKQLKVLATLLLSLSLPTLEA) is a signal peptide.

It localises to the periplasm. The sequence is that of Thioredoxin-related protein DsbJ (dsbJ) from Chlamydia pneumoniae (Chlamydophila pneumoniae).